The primary structure comprises 232 residues: Phosphoribosylformylglycinamidine synthase subunit PurQ (232 aa).

The Glutamine amidotransferase type-1 domain maps to 2-232 (KIAIIQFGGT…SMADYITENF (231 aa)). Cys86 serves as the catalytic Nucleophile. Residues His203 and Glu205 contribute to the active site.

Part of the FGAM synthase complex composed of 1 PurL, 1 PurQ and 2 PurS subunits.

It localises to the cytoplasm. The catalysed reaction is N(2)-formyl-N(1)-(5-phospho-beta-D-ribosyl)glycinamide + L-glutamine + ATP + H2O = 2-formamido-N(1)-(5-O-phospho-beta-D-ribosyl)acetamidine + L-glutamate + ADP + phosphate + H(+). It carries out the reaction L-glutamine + H2O = L-glutamate + NH4(+). The protein operates within purine metabolism; IMP biosynthesis via de novo pathway; 5-amino-1-(5-phospho-D-ribosyl)imidazole from N(2)-formyl-N(1)-(5-phospho-D-ribosyl)glycinamide: step 1/2. Functionally, part of the phosphoribosylformylglycinamidine synthase complex involved in the purines biosynthetic pathway. Catalyzes the ATP-dependent conversion of formylglycinamide ribonucleotide (FGAR) and glutamine to yield formylglycinamidine ribonucleotide (FGAM) and glutamate. The FGAM synthase complex is composed of three subunits. PurQ produces an ammonia molecule by converting glutamine to glutamate. PurL transfers the ammonia molecule to FGAR to form FGAM in an ATP-dependent manner. PurS interacts with PurQ and PurL and is thought to assist in the transfer of the ammonia molecule from PurQ to PurL. This Methanosarcina mazei (strain ATCC BAA-159 / DSM 3647 / Goe1 / Go1 / JCM 11833 / OCM 88) (Methanosarcina frisia) protein is Phosphoribosylformylglycinamidine synthase subunit PurQ.